A 391-amino-acid chain; its full sequence is Thyroid hormone receptor alpha-B (391 aa).

The modulating stretch occupies residues 1–32 (MAQWPEKEEEEQPMFGEEYTGYIPSYLEKDEP). NR C4-type zinc fingers lie at residues 33–53 (CVVC…CEGC) and 71–95 (CKYD…FKKC). Positions 33-100 (CVVCGDKATG…RFKKCIAVGM (68 aa)) form a DNA-binding region, nuclear receptor. Positions 143 to 388 (AEWELIRMVT…PPLFLEVFED (246 aa)) constitute an NR LBD domain.

Belongs to the nuclear hormone receptor family. NR1 subfamily.

The protein resides in the nucleus. High affinity receptor for triiodothyronine. The sequence is that of Thyroid hormone receptor alpha-B (thra2) from Paralichthys olivaceus (Bastard halibut).